We begin with the raw amino-acid sequence, 549 residues long: Sorting nexin-33 (549 aa).

An SH3 domain is found at 1–61 (MALKARALYS…PASYVEILRP (61 aa)). Polar residues predominate over residues 66–83 (VQVDYSGHTQGYTDSPHQ). The tract at residues 66-137 (VQVDYSGHTQ…RPEYTHRPRP (72 aa)) is disordered. Acidic residues predominate over residues 86 to 101 (YDDDEEDDDDWDDWDD). Residues 110–119 (SGSNGVSRSQ) are compositionally biased toward polar residues. Residues 127–137 (PRPEYTHRPRP) show a composition bias toward basic and acidic residues. Positions 205–315 (FSCSVEEPTK…HFLSCQDEKQ (111 aa)) constitute a PX domain. The BAR domain maps to 346–549 (LQDVEERVDV…EKTLHMYDDL (204 aa)).

Belongs to the sorting nexin family.

The protein resides in the cytoplasm. Its subcellular location is the cytosol. The protein localises to the membrane. It localises to the cytoplasmic vesicle membrane. Plays a role in the reorganization of the cytoskeleton, endocytosis and cellular vesicle trafficking, both during interphase and at the end of mitotic cell divisions. Required for efficient progress through mitosis and cytokinesis. Required for normal formation of the cleavage furrow at the end of mitosis. Modulates endocytosis of cell-surface proteins. Promotes membrane tubulation (in vitro). May promote the formation of macropinosomes. This chain is Sorting nexin-33 (snx33), found in Xenopus tropicalis (Western clawed frog).